Here is a 144-residue protein sequence, read N- to C-terminus: Ferredoxin-thioredoxin reductase catalytic chain, chloroplastic (144 aa).

The N-terminal 31 residues, 1–31, are a transit peptide targeting the chloroplast; that stretch reads MKALQASIAYSFPISSPAASPRRFSRVIRAQ. C83 is a [4Fe-4S] cluster binding site. The Nucleophile role is filled by C85. The cysteines at positions 85 and 115 are disulfide-linked. [4Fe-4S] cluster-binding residues include C102, C104, and C113.

It belongs to the ferredoxin thioredoxin reductase beta subunit family. As to quaternary structure, heterodimer of subunit A (variable subunit) and subunit B (catalytic subunit). Heterodimeric FTR forms a complex with ferredoxin and thioredoxin. [4Fe-4S] cluster serves as cofactor.

Its subcellular location is the plastid. The protein resides in the chloroplast. It carries out the reaction [thioredoxin]-disulfide + 2 reduced [2Fe-2S]-[ferredoxin] + 2 H(+) = [thioredoxin]-dithiol + 2 oxidized [2Fe-2S]-[ferredoxin]. In terms of biological role, catalytic subunit of the ferredoxin-thioredoxin reductase (FTR), which catalyzes the two-electron reduction of thioredoxins by the electrons provided by reduced ferredoxin. The chain is Ferredoxin-thioredoxin reductase catalytic chain, chloroplastic (FTRC) from Spinacia oleracea (Spinach).